Here is a 73-residue protein sequence, read N- to C-terminus: RNA-binding protein Hfq (73 aa).

The 61-residue stretch at 8–68 folds into the Sm domain; it reads DQFLNQIRKE…ISTFAPQKNV (61 aa).

The protein belongs to the Hfq family. Homohexamer.

In terms of biological role, RNA chaperone that binds small regulatory RNA (sRNAs) and mRNAs to facilitate mRNA translational regulation in response to envelope stress, environmental stress and changes in metabolite concentrations. Also binds with high specificity to tRNAs. The sequence is that of RNA-binding protein Hfq from Bacillus licheniformis (strain ATCC 14580 / DSM 13 / JCM 2505 / CCUG 7422 / NBRC 12200 / NCIMB 9375 / NCTC 10341 / NRRL NRS-1264 / Gibson 46).